Here is a 22-residue protein sequence, read N- to C-terminus: Brevinin-1OKc (22 aa).

A Lysine amide modification is found at Lys22.

In terms of tissue distribution, expressed by the skin glands.

The protein localises to the secreted. Antimicrobial peptide. Active against Gram-negative bacterium E.coli (MIC=6 uM) and against Gram-positive bacterium S.aureus (MIC=12.5 uM). This Nidirana okinavana (Kampira Falls frog) protein is Brevinin-1OKc.